A 287-amino-acid chain; its full sequence is Cysteine-rich repeat secretory protein 59 (287 aa).

Positions 1 to 26 (METTKKLSPIFCFSSLLCLFFTMNQA) are cleaved as a signal peptide. 2 consecutive Gnk2-homologous domains span residues 32–134 (HMDT…DKFF) and 140–250 (KKPN…ITTS). Residues Asn-43, Asn-47, Asn-63, Asn-72, Asn-93, Asn-103, Asn-111, and Asn-212 are each glycosylated (N-linked (GlcNAc...) asparagine).

The protein belongs to the cysteine-rich repeat secretory protein family.

It is found in the secreted. The polypeptide is Cysteine-rich repeat secretory protein 59 (CRRSP59) (Arabidopsis thaliana (Mouse-ear cress)).